A 417-amino-acid chain; its full sequence is Solute carrier family 25 member 46-A (417 aa).

A compositionally biased stretch (basic and acidic residues) spans 1-13 (MQPRRPDRFDGLE). Positions 1 to 90 (MQPRRPDRFD…AFGEENSNSA (90 aa)) are disordered. A compositionally biased stretch (low complexity) spans 31–41 (SSFPARSFSSS). The Solcar 1 repeat unit spans residues 95–186 (QLNRFAGFGI…GILSEFTHLP (92 aa)). Helical transmembrane passes span 102-122 (FGIGLASLFTENVLAHPCIVL), 162-182 (MGSTFIVQGISLGAEGILSEF), 198-218 (IGGHLLLKGLVYVIVTPFYSA), 257-277 (LLPLLVLTFPTVLHGILHYIV), 313-333 (FPELIANFAASLCADVLLYPL), and 382-402 (LGFYKGFGAVVVQYTLHAIVL). One copy of the Solcar 2 repeat lies at 310 to 415 (EDYFPELIAN…KIIYSSVVQT (106 aa)).

It belongs to the mitochondrial carrier (TC 2.A.29) family.

The protein localises to the mitochondrion outer membrane. Functionally, may play a role in mitochondrial dynamics by controlling mitochondrial membrane fission. The polypeptide is Solute carrier family 25 member 46-A (slc25a46-a) (Xenopus laevis (African clawed frog)).